A 724-amino-acid chain; its full sequence is Probable metal-nicotianamine transporter YSL8 (724 aa).

The segment at 1–58 is disordered; the sequence is MRKGGLTPDRDRQIEEHELQETGISPDIERLKRNINATPYQREEEEEDREEQEESVEG. Positions 8–20 are enriched in basic and acidic residues; that stretch reads PDRDRQIEEHELQ. Phosphoserine is present on Ser-25. A compositionally biased stretch (acidic residues) spans 43-56; sequence EEEEEDREEQEESV. 7 helical membrane passes run 72–92, 96–116, 144–164, 184–204, 245–265, 304–324, and 349–369; these read LTIR…FIVM, LTTG…FFFV, CVVA…LFAM, LGWM…SVVP, VLGK…FFTA, IINI…WPLI, and VFIA…KVLI. The tract at residues 386–407 is disordered; the sequence is RSSLAHKEDPPASPASPLTPRI. Helical transmembrane passes span 423–443, 455–475, 478–497, 501–520, 541–561, 603–623, 641–661, and 679–699; these read IPSW…TAIL, IIVI…GAGL, WSLA…AWAG, GGLL…VSTA, FVSQ…VFWL, LMLC…KDCL, FFLG…LFVW, and GLIC…IAGV.

The protein belongs to the YSL (TC 2.A.67.2) family.

The protein resides in the membrane. May be involved in the transport of nicotianamine-chelated metals. The protein is Probable metal-nicotianamine transporter YSL8 (YSL8) of Arabidopsis thaliana (Mouse-ear cress).